The chain runs to 93 residues: Large ribosomal subunit protein uL23cz/uL23cy (93 aa).

This sequence belongs to the universal ribosomal protein uL23 family. Part of the 50S ribosomal subunit.

It is found in the plastid. Its subcellular location is the chloroplast. Its function is as follows. Binds to 23S rRNA. In Jasminum nudiflorum (Winter jasmine), this protein is Large ribosomal subunit protein uL23cz/uL23cy (rpl23-A).